Consider the following 425-residue polypeptide: RNA polymerase sigma factor SigA (425 aa).

Positions 193 to 263 are sigma-70 factor domain-2; the sequence is MVQSNLRLVV…TRAIADQSRT (71 aa). The Interaction with polymerase core subunit RpoC motif lies at 217-220; it reads DLIQ. The segment at 272–347 is sigma-70 factor domain-3; that stretch reads ETISRIKKTT…EADGETPEDE (76 aa). Residues 360–413 form a sigma-70 factor domain-4 region; the sequence is VLDTLSPRERDVLRLRYGLDDGRMKTLEEIGQIFNVTRERIRQIEAKALRKLRH. A DNA-binding region (H-T-H motif) is located at residues 386–405; sequence LEEIGQIFNVTRERIRQIEA.

Belongs to the sigma-70 factor family. RpoD/SigA subfamily. As to quaternary structure, interacts transiently with the RNA polymerase catalytic core.

It localises to the cytoplasm. In terms of biological role, sigma factors are initiation factors that promote the attachment of RNA polymerase to specific initiation sites and are then released. This sigma factor is the primary sigma factor during exponential growth. The protein is RNA polymerase sigma factor SigA of Synechocystis sp. (strain ATCC 27184 / PCC 6803 / Kazusa).